A 554-amino-acid polypeptide reads, in one-letter code: Intraflagellar transport protein 56 (554 aa).

The segment at 1-24 (MMLSRAKPAVGRGVQHTDKRKKKG) is disordered. 4 TPR repeats span residues 57–90 (EDTNLWIGYCAFHLGDYKRALEEYENATKEENCN), 92–125 (EVWVNLACTYFFLGMYKQAEAAGFKASKSRLQNR), 151–184 (TEDQLSLASIHYMRSHYQEAIDIYKRILLDNREY), and 468–501 (ANDCYKMGQFYYSAKAFDVLERLDPNPEYWEGKR).

This sequence belongs to the IFT56 family. As to quaternary structure, component of the IFT complex B. Interacts with IFT46; the interaction is direct.

It is found in the cell projection. The protein localises to the cilium. Its function is as follows. Component of the intraflagellar transport (IFT) complex B required for transport of proteins in the motile cilium. Required for transport of specific ciliary cargo proteins related to motility, while it is neither required for IFT complex B assembly or motion nor for cilium assembly. Required for efficient coupling between the accumulation of GLI2 and GLI3 at the ciliary tips and their dissociation from the negative regulator SUFU. Plays a key role in maintaining the integrity of the IFT complex B and the proper ciliary localization of the IFT complex B components. Not required for IFT complex A ciliary localization or function. Essential for maintaining proper microtubule organization within the ciliary axoneme. The polypeptide is Intraflagellar transport protein 56 (Homo sapiens (Human)).